The following is a 476-amino-acid chain: 3-ketoacyl-CoA synthase 12 (476 aa).

Residues 1 to 25 form the signal peptide; the sequence is MDLLFLFFSLLLSYLFFKIWKLIDS. The FAE domain occupies 26–313; the sequence is KQDKDCYILD…FMLKLLIKKI (288 aa). Catalysis depends on residues cysteine 168, histidine 247, histidine 344, histidine 348, histidine 377, and asparagine 381.

It belongs to the thiolase-like superfamily. Chalcone/stilbene synthases family. As to expression, expressed in siliques, flowers and leaves.

It is found in the endoplasmic reticulum. The catalysed reaction is a very-long-chain acyl-CoA + malonyl-CoA + H(+) = a very-long-chain 3-oxoacyl-CoA + CO2 + CoA. The protein operates within lipid metabolism; fatty acid biosynthesis. The chain is 3-ketoacyl-CoA synthase 12 from Arabidopsis thaliana (Mouse-ear cress).